The primary structure comprises 139 residues: Large-conductance mechanosensitive channel (139 aa).

A run of 3 helical transmembrane segments spans residues 19–39, 40–60, and 81–101; these read VGVI…ADII, MPIV…LPLS, and GNFL…FMVI.

The protein belongs to the MscL family. In terms of assembly, homopentamer.

It localises to the cell inner membrane. Its function is as follows. Channel that opens in response to stretch forces in the membrane lipid bilayer. May participate in the regulation of osmotic pressure changes within the cell. This Nitrobacter winogradskyi (strain ATCC 25391 / DSM 10237 / CIP 104748 / NCIMB 11846 / Nb-255) protein is Large-conductance mechanosensitive channel.